Consider the following 481-residue polypeptide: Cytochrome P450 monooygenase 2 (481 aa).

Residues 12 to 32 (GSQLLPFYIAIFVFTLVPWAI) form a helical membrane-spanning segment. Cys-418 provides a ligand contact to heme.

The protein belongs to the cytochrome P450 family. Heme serves as cofactor.

It is found in the membrane. Its pathway is plant hormone biosynthesis; gibberellin biosynthesis. Its function is as follows. Gibberellin 20-oxidase; part of the gene cluster that mediates the biosynthesis of gibberellins (GAs), diterpenoids that may provide a selective advantage during infection of the preferred host plant, rice. Gibberellins (GAs) are diterpenoids and are synthesized via the mevalonate pathway. Biosynthesis of the major metabolite GA3 (gibberellic acid) from geranylgeranyl diphosphate (GGPP) requires 13 steps. The GGPP produced by the geranylgeranyl diphosphate synthase GGS2 is converted to ent-kaurene via ent-copalyldiphosphate in a two-step cyclization reaction performed by the bifunctional ent-copalyl diphosphate synthase/ent-kaurene synthase enzyme (CPS/KS). Ent-Kaurene is metabolized to GAs by a series of oxidation reactions catalyzed by cytochrome P450 monooxygenases. Cytochrome P450 monooxygenase P450-4 is an ent-kaurene oxidase that catalyzes the three oxidation steps between ent-kaurene and ent-kaurenoic acid. The highly multifunctional cytochrome P450 monooxygenase P450-1 then catalyzes four steps involving oxidation at two carbon atoms, in the main pathway from ent-kaurenoic acid to GA14 via GA12-aldehyde as well as producing kaurenolides and fujenoic acids as by-products. The cytochrome P450 monooxygenase P450-2 then converts GA14 to GA4 by removal of C-20. GA4 is further converted to GA7 by the GA4 desaturase DES via 1,2-desaturation before cytochrome P450 monooxygenase P450-3, a 13-hydroxylase, hydroxylates GA7 to GA3, the final product of the GA-biosynthetic pathway. The polypeptide is Cytochrome P450 monooygenase 2 (Gibberella fujikuroi (strain CBS 195.34 / IMI 58289 / NRRL A-6831) (Bakanae and foot rot disease fungus)).